Reading from the N-terminus, the 358-residue chain is GMP reductase (358 aa).

Residues 26 to 27 (SR), Lys78, 130 to 132 (DVA), and 181 to 182 (IG) contribute to the NADP(+) site. K(+)-binding residues include Gly182, Gly184, and Cys187. Catalysis depends on Cys187, which acts as the Thioimidate intermediate. The active-site Proton donor/acceptor is Thr189. Arg190 serves as a coordination point for K(+). GMP-binding positions include 220–222 (DGG), 243–244 (GG), 269–271 (GMS), and 287–291 (RASEG). NADP(+)-binding positions include Met270, 286–287 (YR), and 315–318 (SACT).

It belongs to the IMPDH/GMPR family. GuaC type 1 subfamily. Homotetramer.

It catalyses the reaction IMP + NH4(+) + NADP(+) = GMP + NADPH + 2 H(+). Its function is as follows. Catalyzes the irreversible NADPH-dependent deamination of GMP to IMP. It functions in the conversion of nucleobase, nucleoside and nucleotide derivatives of G to A nucleotides, and in maintaining the intracellular balance of A and G nucleotides. The chain is GMP reductase from Caenorhabditis elegans.